The chain runs to 151 residues: uncharacterized protein (151 aa).

The segment at 1-151 (MAELASIIRP…SSKTTTLKAR (151 aa)) is disordered. Low complexity predominate over residues 33-45 (STGLSDLLMLLQS). Residues 53-64 (RARRRTVCRPRR) show a composition bias toward basic residues. Positions 108–123 (SSSSNTSSGTATSGES) are enriched in low complexity. The segment covering 126 to 141 (ADWRDSSSASDDDRIP) has biased composition (basic and acidic residues).

This is an uncharacterized protein from Aotus trivirgatus (Three-striped night monkey).